Here is a 93-residue protein sequence, read N- to C-terminus: Small ribosomal subunit protein uS19 (93 aa).

Positions 74–93 (FSPTRTFRGHVKDDRKSKRR) are disordered. Residues 83-93 (HVKDDRKSKRR) show a composition bias toward basic and acidic residues.

The protein belongs to the universal ribosomal protein uS19 family.

Protein S19 forms a complex with S13 that binds strongly to the 16S ribosomal RNA. The sequence is that of Small ribosomal subunit protein uS19 from Streptomyces griseus subsp. griseus (strain JCM 4626 / CBS 651.72 / NBRC 13350 / KCC S-0626 / ISP 5235).